A 570-amino-acid polypeptide reads, in one-letter code: Periplasmic trehalase (570 aa).

The N-terminal stretch at 1–34 is a signal peptide; it reads MIPPEIRRSVLLQKAIKLALAGTLLTFASFSATA. Substrate-binding positions include R159, 166–167, N203, 212–214, 284–286, and G317; these read WD, RSQ, and RPE. Catalysis depends on proton donor/acceptor residues D319 and E503. Substrate is bound at residue E518. The segment at 544–570 is disordered; the sequence is KPCDSVPSTRPASLSATPTKTPSAATQ. Positions 554-570 are enriched in low complexity; the sequence is PASLSATPTKTPSAATQ.

Belongs to the glycosyl hydrolase 37 family. In terms of assembly, monomer.

Its subcellular location is the periplasm. It carries out the reaction alpha,alpha-trehalose + H2O = alpha-D-glucose + beta-D-glucose. Its function is as follows. Provides the cells with the ability to utilize trehalose at high osmolarity by splitting it into glucose molecules that can subsequently be taken up by the phosphotransferase-mediated uptake system. The protein is Periplasmic trehalase of Salmonella paratyphi A (strain AKU_12601).